We begin with the raw amino-acid sequence, 547 residues long: MAKEIFFSDEARNRLYEGVRKLNDAVKVTMGPRGRNVLVQKSFGAPAITKDGVSVAKEIELKDALENMGAGLVKEVASKTNDEAGDGTTTATVLAHSIFKEGLRNITAGANPVEVKRGMDKQAAAIIAELKNLSRKVTDKKEIAQVATISANSDSAIGGLIADAMEKVGKDGVITVEEAKSIQDELNVVEGMQFDRGYLSPYFITNAEKMQVELQSPYILLFDKKITNLKDLLPVLEQIQKTGKPLLIIAEDIEGEALATLVVNKLRGVLNISAVKAPGFGDRRKAMLEDIAILTGGEVVSEELGRTLESATLSDLGQASSVIIDKDNTTIVNGAGEKSAIDARIIQIKAQIAETTSDYDKEKLQERLAKLSGGVAVIKVGAATETEMKEKKDRVDDALSATKAAVEEGIVIGGGAAFIKAGAKVDLNLSGDEAIGADIVRRALTAPLRQIAENAGFDAGVVANSVSVSKDDNYGFNAATGEYVDMFKAGIIDPVKVERIALQNAVSVASLLLTTEATISELKEDKPMPAMPDMSGMGGMGGMGGMM.

Residues 29–32 (TMGP), K50, 86–90 (DGTTT), G414, 477–479 (NAA), and D493 each bind ATP.

This sequence belongs to the chaperonin (HSP60) family. Forms a cylinder of 14 subunits composed of two heptameric rings stacked back-to-back. Interacts with the co-chaperonin GroES.

It is found in the cytoplasm. The enzyme catalyses ATP + H2O + a folded polypeptide = ADP + phosphate + an unfolded polypeptide.. Together with its co-chaperonin GroES, plays an essential role in assisting protein folding. The GroEL-GroES system forms a nano-cage that allows encapsulation of the non-native substrate proteins and provides a physical environment optimized to promote and accelerate protein folding. The polypeptide is Chaperonin GroEL (Campylobacter rectus (Wolinella recta)).